A 151-amino-acid chain; its full sequence is Small ribosomal subunit protein eS6 (151 aa).

It belongs to the eukaryotic ribosomal protein eS6 family.

The sequence is that of Small ribosomal subunit protein eS6 from Pyrobaculum calidifontis (strain DSM 21063 / JCM 11548 / VA1).